Reading from the N-terminus, the 116-residue chain is MAGRSGASDTELLQVCKIIKILYQSNPCPEPTGTRQARRNRRRRWRARQRQIREISERILTSCLGRPPEPVTLQLPPLERLTLNCSEDCGTSGEKGEGSPQISLESSTILGTGTKE.

A phosphoserine; by host CK2 mark is found at Ser5 and Ser8. The segment at 18–26 (IIKILYQSN) is homomultimerization. The short motif at 34-50 (TRQARRNRRRRWRARQR) is the Nuclear localization signal and RNA-binding (RRE) element. A Nuclear export signal and binding to XPO1 motif is present at residues 73–84 (LQLPPLERLTLN). Positions 87 to 116 (EDCGTSGEKGEGSPQISLESSTILGTGTKE) are disordered. Residues Ser92 and Ser99 each carry the phosphoserine; by host modification. Positions 100 to 116 (PQISLESSTILGTGTKE) are enriched in polar residues.

It belongs to the HIV-1 REV protein family. Homomultimer; when bound to the RRE. Multimeric assembly is essential for activity and may involve XPO1. Binds to human KPNB1, XPO1, TNPO1, RANBP5 and IPO7. Interacts with the viral Integrase. Interacts with human KHDRBS1. Interacts with human NAP1; this interaction decreases Rev multimerization and stimulates its activity. Interacts with human DEAD-box helicases DDX3 and DDX24; these interactions may serve for viral RNA export to the cytoplasm and packaging, respectively. Interacts with human PSIP1; this interaction may inhibit HIV-1 DNA integration by promoting dissociation of the Integrase-LEDGF/p75 complex. Post-translationally, asymmetrically arginine dimethylated at one site by host PRMT6. Methylation impairs the RNA-binding activity and export of viral RNA from the nucleus to the cytoplasm. Phosphorylated by protein kinase CK2. Presence of, and maybe binding to the N-terminus of the regulatory beta subunit of CK2 is necessary for CK2-mediated Rev's phosphorylation.

Its subcellular location is the host nucleus. It localises to the host nucleolus. The protein localises to the host cytoplasm. Functionally, escorts unspliced or incompletely spliced viral pre-mRNAs (late transcripts) out of the nucleus of infected cells. These pre-mRNAs carry a recognition sequence called Rev responsive element (RRE) located in the env gene, that is not present in fully spliced viral mRNAs (early transcripts). This function is essential since most viral proteins are translated from unspliced or partially spliced pre-mRNAs which cannot exit the nucleus by the pathway used by fully processed cellular mRNAs. Rev itself is translated from a fully spliced mRNA that readily exits the nucleus. Rev's nuclear localization signal (NLS) binds directly to KPNB1/Importin beta-1 without previous binding to KPNA1/Importin alpha-1. KPNB1 binds to the GDP bound form of RAN (Ran-GDP) and targets Rev to the nucleus. In the nucleus, the conversion from Ran-GDP to Ran-GTP dissociates Rev from KPNB1 and allows Rev's binding to the RRE in viral pre-mRNAs. Rev multimerization on the RRE via cooperative assembly exposes its nuclear export signal (NES) to the surface. Rev can then form a complex with XPO1/CRM1 and Ran-GTP, leading to nuclear export of the complex. Conversion from Ran-GTP to Ran-GDP mediates dissociation of the Rev/RRE/XPO1/RAN complex, so that Rev can return to the nucleus for a subsequent round of export. Beside KPNB1, also seems to interact with TNPO1/Transportin-1, RANBP5/IPO5 and IPO7/RANBP7 for nuclear import. The nucleoporin-like HRB/RIP is an essential cofactor that probably indirectly interacts with Rev to release HIV RNAs from the perinuclear region to the cytoplasm. The polypeptide is Protein Rev (Human immunodeficiency virus type 1 group M subtype H (isolate 90CF056) (HIV-1)).